Here is a 537-residue protein sequence, read N- to C-terminus: Ribonuclease Y (537 aa).

Residues 4–24 (FPIIMSVFAAIIGLVIGYVSV) traverse the membrane as a helical segment. Positions 112–148 (ASTLDRKDDNLSNKEKALEQKEQSLSDKSKHIDAREE) are disordered. One can recognise a KH domain in the interval 227-287 (TNSTVHLPDD…IRREIARMTM (61 aa)). In terms of domain architecture, HD spans 353 to 446 (VLRHSIEVAK…VAAADALSAA (94 aa)).

It belongs to the RNase Y family.

Its subcellular location is the cell membrane. Its function is as follows. Endoribonuclease that initiates mRNA decay. The chain is Ribonuclease Y from Streptococcus sanguinis (strain SK36).